The primary structure comprises 577 residues: Arginine--tRNA ligase (577 aa).

A 'HIGH' region motif is present at residues 122 to 132; the sequence is PNVAKEMHVGH.

Belongs to the class-I aminoacyl-tRNA synthetase family. In terms of assembly, monomer.

The protein resides in the cytoplasm. The catalysed reaction is tRNA(Arg) + L-arginine + ATP = L-arginyl-tRNA(Arg) + AMP + diphosphate. The chain is Arginine--tRNA ligase from Citrobacter koseri (strain ATCC BAA-895 / CDC 4225-83 / SGSC4696).